The following is a 323-amino-acid chain: ADP-L-glycero-D-manno-heptose-6-epimerase (323 aa).

Residues 10–11, 31–32, K38, K53, 75–79, and N92 each bind NADP(+); these read FI, DN, and EGACS. The Proton acceptor role is filled by Y139. K143 provides a ligand contact to NADP(+). N168 contributes to the substrate binding site. NADP(+) is bound by residues V169 and K177. K177 (proton acceptor) is an active-site residue. Substrate is bound by residues D179, K186, 200–203, R213, and Y277; that span reads FGAY.

This sequence belongs to the NAD(P)-dependent epimerase/dehydratase family. HldD subfamily. As to quaternary structure, homopentamer. NADP(+) serves as cofactor.

It catalyses the reaction ADP-D-glycero-beta-D-manno-heptose = ADP-L-glycero-beta-D-manno-heptose. It participates in nucleotide-sugar biosynthesis; ADP-L-glycero-beta-D-manno-heptose biosynthesis; ADP-L-glycero-beta-D-manno-heptose from D-glycero-beta-D-manno-heptose 7-phosphate: step 4/4. In terms of biological role, catalyzes the interconversion between ADP-D-glycero-beta-D-manno-heptose and ADP-L-glycero-beta-D-manno-heptose via an epimerization at carbon 6 of the heptose. This Hydrogenovibrio crunogenus (strain DSM 25203 / XCL-2) (Thiomicrospira crunogena) protein is ADP-L-glycero-D-manno-heptose-6-epimerase.